Consider the following 331-residue polypeptide: XylDLEGF operon transcriptional activator 3 (331 aa).

Residues 214–315 enclose the HTH araC/xylS-type domain; sequence ERVVQFIEDN…GELPSDTLRR (102 aa). DNA-binding regions (H-T-H motif) lie at residues 231–252 and 282–305; these read ERLAELALMSPRSLYTLFEKHA and VTEMALDYGFFHTGRFAENYRSTF.

The protein resides in the cytoplasm. Regulatory protein of the TOL plasmid xyl operons. XylS activates the xylXYZLTEGFJQKIH operon required for the degradation of toluene, m-xylene and p-xylene. The protein is XylDLEGF operon transcriptional activator 3 (xylS3) of Pseudomonas putida (Arthrobacter siderocapsulatus).